We begin with the raw amino-acid sequence, 465 residues long: ATP synthase subunit beta (465 aa).

148–155 is an ATP binding site; that stretch reads GGAGVGKT.

This sequence belongs to the ATPase alpha/beta chains family. F-type ATPases have 2 components, CF(1) - the catalytic core - and CF(0) - the membrane proton channel. CF(1) has five subunits: alpha(3), beta(3), gamma(1), delta(1), epsilon(1). CF(0) has three main subunits: a(1), b(2) and c(9-12). The alpha and beta chains form an alternating ring which encloses part of the gamma chain. CF(1) is attached to CF(0) by a central stalk formed by the gamma and epsilon chains, while a peripheral stalk is formed by the delta and b chains.

Its subcellular location is the cell inner membrane. It catalyses the reaction ATP + H2O + 4 H(+)(in) = ADP + phosphate + 5 H(+)(out). Functionally, produces ATP from ADP in the presence of a proton gradient across the membrane. The catalytic sites are hosted primarily by the beta subunits. This chain is ATP synthase subunit beta, found in Neisseria gonorrhoeae (strain ATCC 700825 / FA 1090).